The sequence spans 53 residues: Membrane antigen containing repeating peptides (53 aa).

6 tandem repeats follow at residues 1–10 (EAEEAARLQA), 11–20 (EAEEAARQQA), 21–30 (EAEEAARLQA), 31–40 (EAEEAARLQA), 41–50 (EAEEAARLQA), and 51–53 (EAE). A 6 X 10 AA tandem repeats region spans residues 1–53 (EAEEAARLQAEAEEAARQQAEAEEAARLQAEAEEAARLQAEAEEAARLQAEAE). Residues 1 to 53 (EAEEAARLQAEAEEAARQQAEAEEAARLQAEAEEAARLQAEAEEAARLQAEAE) form a disordered region.

The protein localises to the membrane. The chain is Membrane antigen containing repeating peptides from Leishmania major.